The following is a 350-amino-acid chain: S-adenosylmethionine:tRNA ribosyltransferase-isomerase (350 aa).

This sequence belongs to the QueA family. Monomer.

Its subcellular location is the cytoplasm. The catalysed reaction is 7-aminomethyl-7-carbaguanosine(34) in tRNA + S-adenosyl-L-methionine = epoxyqueuosine(34) in tRNA + adenine + L-methionine + 2 H(+). The protein operates within tRNA modification; tRNA-queuosine biosynthesis. In terms of biological role, transfers and isomerizes the ribose moiety from AdoMet to the 7-aminomethyl group of 7-deazaguanine (preQ1-tRNA) to give epoxyqueuosine (oQ-tRNA). In Bacillus thuringiensis subsp. konkukian (strain 97-27), this protein is S-adenosylmethionine:tRNA ribosyltransferase-isomerase.